A 280-amino-acid chain; its full sequence is MAIRKYKPTTPGRRASSVSMFSEITRSTPEKSLLRPLSKTGGRNSHGHITTRHRGGGHKRRYRVIDFRRNDKDGVLAKVAHIEYDPNRTANIALLHYFDGEKRYIIAPKGLTQGTVVESGANADIKVGNNLPLRNIPTGTTIHNVELKPGAGAKLARSAGSSVQLLGKEGPYAILRMPSTEIRRVDIRCRATVGEVGNADQINIRWGKAGRMRWKGWRPTVRGVVMNPVDHPHGGGEGKTSGGRHPVSPWGQKEGRTRRPKRYSDDMIVRRRRANKNKKR.

Disordered regions lie at residues M1 to M20, P29 to H58, and V225 to R280. Basic residues predominate over residues S45 to H58. Residues K253–V269 are compositionally biased toward basic and acidic residues. The segment covering R270–R280 has biased composition (basic residues).

The protein belongs to the universal ribosomal protein uL2 family. Part of the 50S ribosomal subunit. Forms a bridge to the 30S subunit in the 70S ribosome.

Its function is as follows. One of the primary rRNA binding proteins. Required for association of the 30S and 50S subunits to form the 70S ribosome, for tRNA binding and peptide bond formation. It has been suggested to have peptidyltransferase activity; this is somewhat controversial. Makes several contacts with the 16S rRNA in the 70S ribosome. The polypeptide is Large ribosomal subunit protein uL2 (Corynebacterium efficiens (strain DSM 44549 / YS-314 / AJ 12310 / JCM 11189 / NBRC 100395)).